The following is a 221-amino-acid chain: Inositol phosphorylceramide synthase regulatory subunit KEI1 (221 aa).

A run of 4 helical transmembrane segments spans residues 11 to 31 (SFLGFMPLYLAVEIVLGISIL), 54 to 74 (WIAYLWSVFTLIVFSQGLYLI), 79 to 99 (LLVFSQICVLYTIDTISTCFF), and 154 to 174 (ILITLVSLIFRFYFNFILASF). Residues 176-221 (QELLHHPKYLVDRDDVEQNLKNKPIWKRLWAKSQKGCYKLCKNLLE) form a COPI vesicle-binding region.

This sequence belongs to the KEI1 family. As to quaternary structure, component of the inositol phosphorylceramide synthase complex composed of at least AUR1 and KEI1. Interacts (via C-terminal region) with COP1 and SEC21. Note=The interaction with AUR1 seems to occur with the full-length protein before cleavage by KEX2 since both full-length and short chains of KEI1 interact with AUR1. In terms of processing, the precursor protein is cleaved into two polypeptide chains, KEI1N and KEI1C. The cleavage is performed in the Golgi apparatus by the KEX2 protease which recognizes residue Arg-135. Generation of KEX2 cleavage site may have been an accidental event in evolution without specific advantages or disadvantages in IPC synthesis.

It localises to the golgi apparatus membrane. Regulatory component of the inositol phosphorylceramide (ICP) synthase which catalyzes the addition of a phosphorylinositol group onto ceramide to form inositol phosphorylceramide, an essential step in sphingolipid biosynthesis. Helps the medial Golgi localization of IPC synthase in a COPI vesicle-dependent manner. The polypeptide is Inositol phosphorylceramide synthase regulatory subunit KEI1 (KEI1) (Saccharomyces cerevisiae (strain ATCC 204508 / S288c) (Baker's yeast)).